The chain runs to 560 residues: Dihydroxy-acid dehydratase (560 aa).

Position 78 (D78) interacts with Mg(2+). C119 lines the [2Fe-2S] cluster pocket. The Mg(2+) site is built by D120 and K121. Residue K121 is modified to N6-carboxylysine. C192 contacts [2Fe-2S] cluster. A Mg(2+)-binding site is contributed by E446. The Proton acceptor role is filled by S472.

It belongs to the IlvD/Edd family. Homodimer. The cofactor is [2Fe-2S] cluster. Mg(2+) serves as cofactor.

The catalysed reaction is (2R)-2,3-dihydroxy-3-methylbutanoate = 3-methyl-2-oxobutanoate + H2O. The enzyme catalyses (2R,3R)-2,3-dihydroxy-3-methylpentanoate = (S)-3-methyl-2-oxopentanoate + H2O. It participates in amino-acid biosynthesis; L-isoleucine biosynthesis; L-isoleucine from 2-oxobutanoate: step 3/4. Its pathway is amino-acid biosynthesis; L-valine biosynthesis; L-valine from pyruvate: step 3/4. In terms of biological role, functions in the biosynthesis of branched-chain amino acids. Catalyzes the dehydration of (2R,3R)-2,3-dihydroxy-3-methylpentanoate (2,3-dihydroxy-3-methylvalerate) into 2-oxo-3-methylpentanoate (2-oxo-3-methylvalerate) and of (2R)-2,3-dihydroxy-3-methylbutanoate (2,3-dihydroxyisovalerate) into 2-oxo-3-methylbutanoate (2-oxoisovalerate), the penultimate precursor to L-isoleucine and L-valine, respectively. This Anaeromyxobacter sp. (strain K) protein is Dihydroxy-acid dehydratase.